Here is a 545-residue protein sequence, read N- to C-terminus: MTTNYIFVTGGVVSSLGKGIAAASLAAILEARGLNVTIMKLDPYINVDPGTMSPIQHGEVFVTEDGAETDLDLGHYERFIRTRMTRRNNFTTGRIYSEVLRKERRGDYLGATVQVIPHITNAIKERILAGGEGHDVVLVEIGGTVGDIESLPFLEAIRQMAVEVGREHTMFMHLTLVPYMAAAGEVKTKPTQHSVKELLSIGIQPDVLICRSDRAVPANERAKIALFCNVPEKAVISLKDVDSIYKIPGLLKSQGLDDYICKRFSLNCPEANLSEWEQVIYEEANPVGEVTIGMVGKYIELPDAYKSVIEALKHGGLKNRVTVNIKLIDSQDVETRGEELLKGLDAILIPGGFGYRGVEGKIATARYARENNIPYLGICLGMQVAMIEYARNVAGMENANSTEFVPDCKYPVVALITEWRDENGNVETRSEKSDLGGTMRLGAQQCQLSDDSLVRKLYGEPVITERHRHRYEVNNMLLKPIEAAGLRVAGRSGDDQLVEIIEVPNHPWFVACQFHPEFTSTPRDGHPLFAGFVKAASEYQKRQAK.

Positions 1–266 are amidoligase domain; the sequence is MTTNYIFVTG…DDYICKRFSL (266 aa). Serine 14 contributes to the CTP binding site. Position 14 (serine 14) interacts with UTP. ATP contacts are provided by residues 15–20 and aspartate 72; that span reads SLGKGI. Mg(2+)-binding residues include aspartate 72 and glutamate 140. CTP is bound by residues 147-149, 187-192, and lysine 223; these read DIE and KTKPTQ. Residues 187–192 and lysine 223 each bind UTP; that span reads KTKPTQ. 239 to 241 contributes to the ATP binding site; the sequence is KDV. The Glutamine amidotransferase type-1 domain maps to 291–542; the sequence is TIGMVGKYIE…VKAASEYQKR (252 aa). Residue glycine 352 coordinates L-glutamine. The Nucleophile; for glutamine hydrolysis role is filled by cysteine 379. Residues 380–383, glutamate 403, and arginine 470 contribute to the L-glutamine site; that span reads LGMQ. Catalysis depends on residues histidine 515 and glutamate 517.

It belongs to the CTP synthase family. In terms of assembly, homotetramer.

The enzyme catalyses UTP + L-glutamine + ATP + H2O = CTP + L-glutamate + ADP + phosphate + 2 H(+). It catalyses the reaction L-glutamine + H2O = L-glutamate + NH4(+). The catalysed reaction is UTP + NH4(+) + ATP = CTP + ADP + phosphate + 2 H(+). It participates in pyrimidine metabolism; CTP biosynthesis via de novo pathway; CTP from UDP: step 2/2. With respect to regulation, allosterically activated by GTP, when glutamine is the substrate; GTP has no effect on the reaction when ammonia is the substrate. The allosteric effector GTP functions by stabilizing the protein conformation that binds the tetrahedral intermediate(s) formed during glutamine hydrolysis. Inhibited by the product CTP, via allosteric rather than competitive inhibition. Functionally, catalyzes the ATP-dependent amination of UTP to CTP with either L-glutamine or ammonia as the source of nitrogen. Regulates intracellular CTP levels through interactions with the four ribonucleotide triphosphates. This is CTP synthase from Cronobacter sakazakii (strain ATCC BAA-894) (Enterobacter sakazakii).